The chain runs to 541 residues: T-complex protein 1 subunit epsilon (541 aa).

N-acetylalanine is present on Ala-2. Residue Lys-20 forms a Glycyl lysine isopeptide (Lys-Gly) (interchain with G-Cter in SUMO2) linkage. Ser-26 is subject to Phosphoserine. Gly-53 is an ADP binding site. Position 53 (Gly-53) interacts with ATP. Mg(2+) is bound at residue Asp-104. Gly-105, Thr-106, Thr-107, and Ser-175 together coordinate ADP. Residues Thr-106 and Thr-107 each coordinate ATP. Glycyl lysine isopeptide (Lys-Gly) (interchain with G-Cter in SUMO2) cross-links involve residues Lys-210, Lys-214, Lys-265, Lys-275, and Lys-279. Phosphoserine is present on Ser-346. Lys-392 is covalently cross-linked (Glycyl lysine isopeptide (Lys-Gly) (interchain with G-Cter in SUMO2)). 4 residues coordinate ADP: Gly-422, Asp-492, Glu-508, and Lys-513. Gly-422 serves as a coordination point for ATP. Ser-539 carries the post-translational modification Phosphoserine.

It belongs to the TCP-1 chaperonin family. As to quaternary structure, component of the chaperonin-containing T-complex (TRiC), a hexadecamer composed of two identical back-to-back stacked rings enclosing a protein folding chamber. Each ring is made up of eight different subunits: TCP1/CCT1, CCT2, CCT3, CCT4, CCT5, CCT6A/CCT6, CCT7, CCT8. Interacts with PACRG. Interacts with DNAAF4. Interacts with DLEC1. Interacts with SPMAP2. Ubiquitinated by the DCX(DCAF12) complex specifically recognizes the diglutamate (Glu-Glu) at the C-terminus, leading to its degradation.

The protein resides in the cytoplasm. The protein localises to the cytoskeleton. It localises to the microtubule organizing center. It is found in the centrosome. The catalysed reaction is ATP + H2O = ADP + phosphate + H(+). Functionally, component of the chaperonin-containing T-complex (TRiC), a molecular chaperone complex that assists the folding of actin, tubulin and other proteins upon ATP hydrolysis. The TRiC complex mediates the folding of WRAP53/TCAB1, thereby regulating telomere maintenance. As part of the TRiC complex may play a role in the assembly of BBSome, a complex involved in ciliogenesis regulating transports vesicles to the cilia. The polypeptide is T-complex protein 1 subunit epsilon (CCT5) (Homo sapiens (Human)).